The primary structure comprises 578 residues: Kelch repeat-containing protein kel-10 (578 aa).

In terms of domain architecture, BTB spans 51–118; that stretch reads PTVTLVLRNN…PKAFEQGIKP (68 aa). Positions 158-236 constitute a BACK domain; the sequence is IKIFRLALLY…NSPLQSDRMA (79 aa). Kelch repeat units follow at residues 265-315, 316-362, 368-414, 416-462, 464-510, and 512-558; these read AIVC…VVED, KLIV…RIND, LIFA…TIDN, IVVI…SIMN, VCMI…QMDT, and SIYV…TLSD.

In Caenorhabditis elegans, this protein is Kelch repeat-containing protein kel-10.